A 241-amino-acid polypeptide reads, in one-letter code: 1-(5-phosphoribosyl)-5-[(5-phosphoribosylamino)methylideneamino] imidazole-4-carboxamide isomerase (241 aa).

Catalysis depends on aspartate 10, which acts as the Proton acceptor. Aspartate 131 functions as the Proton donor in the catalytic mechanism.

The protein belongs to the HisA/HisF family.

Its subcellular location is the cytoplasm. It carries out the reaction 1-(5-phospho-beta-D-ribosyl)-5-[(5-phospho-beta-D-ribosylamino)methylideneamino]imidazole-4-carboxamide = 5-[(5-phospho-1-deoxy-D-ribulos-1-ylimino)methylamino]-1-(5-phospho-beta-D-ribosyl)imidazole-4-carboxamide. It functions in the pathway amino-acid biosynthesis; L-histidine biosynthesis; L-histidine from 5-phospho-alpha-D-ribose 1-diphosphate: step 4/9. The protein is 1-(5-phosphoribosyl)-5-[(5-phosphoribosylamino)methylideneamino] imidazole-4-carboxamide isomerase of Bifidobacterium longum subsp. infantis (strain ATCC 15697 / DSM 20088 / JCM 1222 / NCTC 11817 / S12).